A 430-amino-acid polypeptide reads, in one-letter code: Agropine synthesis reductase (430 aa).

Residue 203-227 (LVSGSNRGVGKAIAEDLIAHGYRLS) participates in NAD(+) binding. Ser-333 serves as a coordination point for substrate. The Proton acceptor role is filled by Tyr-346.

This sequence belongs to the short-chain dehydrogenases/reductases (SDR) family.

It participates in opine metabolism; mannopine biosynthesis. Functionally, reduces deoxy-fructosyl-glutamine to mannopine. The protein is Agropine synthesis reductase (mas1) of Rhizobium rhizogenes (Agrobacterium rhizogenes).